The primary structure comprises 511 residues: Bifunctional purine biosynthesis protein PurH (511 aa).

Positions 1–145 (MKKRALVSVS…KNHKFVSVIV (145 aa)) constitute an MGS-like domain.

This sequence belongs to the PurH family.

The catalysed reaction is (6R)-10-formyltetrahydrofolate + 5-amino-1-(5-phospho-beta-D-ribosyl)imidazole-4-carboxamide = 5-formamido-1-(5-phospho-D-ribosyl)imidazole-4-carboxamide + (6S)-5,6,7,8-tetrahydrofolate. It carries out the reaction IMP + H2O = 5-formamido-1-(5-phospho-D-ribosyl)imidazole-4-carboxamide. It functions in the pathway purine metabolism; IMP biosynthesis via de novo pathway; 5-formamido-1-(5-phospho-D-ribosyl)imidazole-4-carboxamide from 5-amino-1-(5-phospho-D-ribosyl)imidazole-4-carboxamide (10-formyl THF route): step 1/1. Its pathway is purine metabolism; IMP biosynthesis via de novo pathway; IMP from 5-formamido-1-(5-phospho-D-ribosyl)imidazole-4-carboxamide: step 1/1. The polypeptide is Bifunctional purine biosynthesis protein PurH (Bacillus cereus (strain B4264)).